Consider the following 307-residue polypeptide: Small ribosomal subunit biogenesis GTPase RsgA (307 aa).

Residues 80-237 (KADLRQTIVS…IVDTPGIKEF (158 aa)) form the CP-type G domain. GTP contacts are provided by residues 129-132 (NKID) and 180-188 (GQSGVGKSS). Residues C261, C266, H268, and C274 each contribute to the Zn(2+) site.

This sequence belongs to the TRAFAC class YlqF/YawG GTPase family. RsgA subfamily. Monomer. Associates with 30S ribosomal subunit, binds 16S rRNA. It depends on Zn(2+) as a cofactor.

The protein resides in the cytoplasm. Its function is as follows. One of several proteins that assist in the late maturation steps of the functional core of the 30S ribosomal subunit. Helps release RbfA from mature subunits. May play a role in the assembly of ribosomal proteins into the subunit. Circularly permuted GTPase that catalyzes slow GTP hydrolysis, GTPase activity is stimulated by the 30S ribosomal subunit. The sequence is that of Small ribosomal subunit biogenesis GTPase RsgA from Borreliella burgdorferi (strain ATCC 35210 / DSM 4680 / CIP 102532 / B31) (Borrelia burgdorferi).